The following is a 104-amino-acid chain: MARKIRRDDEIIVLAGKDKGKLGKVLKVLPAADRLIVEGVNLVKKHQKPNPQLGVTGGVIEKEASIHVSNVAIVNPKTGKADRIGFRFEDDKKVRFFKSDGELV.

The protein belongs to the universal ribosomal protein uL24 family. As to quaternary structure, part of the 50S ribosomal subunit.

In terms of biological role, one of two assembly initiator proteins, it binds directly to the 5'-end of the 23S rRNA, where it nucleates assembly of the 50S subunit. One of the proteins that surrounds the polypeptide exit tunnel on the outside of the subunit. This chain is Large ribosomal subunit protein uL24, found in Pseudoalteromonas atlantica (strain T6c / ATCC BAA-1087).